The primary structure comprises 307 residues: D-alanine--D-alanine ligase (307 aa).

Positions 108 to 301 (KEVFAAAGLP…FPEFCAWMVE (194 aa)) constitute an ATP-grasp domain. Residue 135–185 (LPPPYVVKPNCEGSSVGVYIVQADANGPPRLAPDMPRDLMVETYIPGRELT) participates in ATP binding. Mg(2+) contacts are provided by Asp252, Glu268, and Asn270.

Belongs to the D-alanine--D-alanine ligase family. It depends on Mg(2+) as a cofactor. The cofactor is Mn(2+).

The protein resides in the cytoplasm. The catalysed reaction is 2 D-alanine + ATP = D-alanyl-D-alanine + ADP + phosphate + H(+). It participates in cell wall biogenesis; peptidoglycan biosynthesis. In terms of biological role, cell wall formation. The protein is D-alanine--D-alanine ligase of Cereibacter sphaeroides (strain ATCC 17025 / ATH 2.4.3) (Rhodobacter sphaeroides).